The following is a 317-amino-acid chain: COP9 signalosome complex subunit 6b (317 aa).

Positions 11 to 164 constitute an MPN domain; sequence FKLHPLVMLN…VTIYESEFHV (154 aa).

Belongs to the peptidase M67A family. CSN6 subfamily. As to quaternary structure, component of the CSN complex, probably composed of CSN1, CSN2, CSN3, CSN4, CSN5 (CSN5A or CSN5B), CSN6 (CSN6A or CSN6B), CSN7 and CSN8. Interacts with itself. In the complex, it probably interacts directly with CSN4, CSN5A or CSN5B, and CSN7. Binds to the translation initiation factors TIF3E1.

It localises to the cytoplasm. The protein localises to the nucleus. Component of the COP9 signalosome complex (CSN), a complex involved in various cellular and developmental processes such as photomorphogenesis and auxin and jasmonate responses. The CSN complex is an essential regulator of the ubiquitin (Ubl) conjugation pathway by mediating the deneddylation of the cullin subunits of SCF-type E3 ligase complexes, leading to decrease the Ubl ligase activity of SCF. It is involved in repression of photomorphogenesis in darkness by regulating the activity of COP1-containing Ubl ligase complexes. The complex is also required for degradation of PSIAA6 by regulating the activity of the Ubl ligase SCF-TIR complex. Essential for the structural integrity of the CSN holocomplex. The chain is COP9 signalosome complex subunit 6b from Arabidopsis thaliana (Mouse-ear cress).